We begin with the raw amino-acid sequence, 474 residues long: Ubiquinol-cytochrome-c reductase complex core protein 2, mitochondrial (474 aa).

Residues 1–42 (MKSVVRSKGTQALFRRFSSALGDSINPNQVGVGDNVIRVNGR) constitute a mitochondrion transit peptide.

Belongs to the peptidase M16 family. UQCRC2/QCR2 subfamily. Component of the ubiquinol-cytochrome c oxidoreductase (cytochrome b-c1 complex, complex III, CIII), a multisubunit enzyme composed of 3 respiratory subunits cytochrome b, cytochrome c1 and Rieske protein, 2 core protein subunits, and additional low-molecular weight protein subunits. The complex exists as an obligatory dimer and forms supercomplexes (SCs) in the inner mitochondrial membrane with cytochrome c oxidase (complex IV, CIV).

The protein localises to the mitochondrion inner membrane. In terms of biological role, component of the ubiquinol-cytochrome c oxidoreductase, a multisubunit transmembrane complex that is part of the mitochondrial electron transport chain which drives oxidative phosphorylation. The respiratory chain contains 3 multisubunit complexes succinate dehydrogenase (complex II, CII), ubiquinol-cytochrome c oxidoreductase (cytochrome b-c1 complex, complex III, CIII) and cytochrome c oxidase (complex IV, CIV), that cooperate to transfer electrons derived from NADH and succinate to molecular oxygen, creating an electrochemical gradient over the inner membrane that drives transmembrane transport and the ATP synthase. The cytochrome b-c1 complex catalyzes electron transfer from ubiquinol to cytochrome c, linking this redox reaction to translocation of protons across the mitochondrial inner membrane, with protons being carried across the membrane as hydrogens on the quinol. In the process called Q cycle, 2 protons are consumed from the matrix, 4 protons are released into the intermembrane space and 2 electrons are passed to cytochrome c. In Euglena gracilis, this protein is Ubiquinol-cytochrome-c reductase complex core protein 2, mitochondrial.